Consider the following 1350-residue polypeptide: Ubiquitin carboxyl-terminal hydrolase 47 (1350 aa).

The disordered stretch occupies residues 111 to 138 (DGEQPQLTSDESGTADSSGLDDSSQEKF). Residues 115-132 (PQLTSDESGTADSSGLDD) are compositionally biased toward polar residues. The USP domain maps to 173-548 (VGLVNQAMTC…NAYMLMYRLK (376 aa)). Cys-182 (nucleophile) is an active-site residue. Residues 409–437 (EDEKSPQTDSCTDSGAENEGSCHSDQMSN) form a disordered region. Residues 415–437 (QTDSCTDSGAENEGSCHSDQMSN) show a composition bias toward polar residues. Catalysis depends on His-487, which acts as the Proton acceptor. Disordered stretches follow at residues 815–836 (HPRP…PQED) and 859–1000 (SLQQ…ESGK). Positions 859–877 (SLQQHQDGGNGDSSKSTEG) are enriched in polar residues. Positions 916-926 (PEERSDSDVNN) are enriched in basic and acidic residues. Residues 929 to 945 (STSSVDSDILSSSHSSD) show a composition bias toward low complexity. Residues 973–982 (KANDGKKETW) are compositionally biased toward basic and acidic residues. Positions 983-996 (DTAEEDSGTDSEYD) are enriched in acidic residues.

This sequence belongs to the peptidase C19 family. USP47 subfamily.

It localises to the cytoplasm. It catalyses the reaction Thiol-dependent hydrolysis of ester, thioester, amide, peptide and isopeptide bonds formed by the C-terminal Gly of ubiquitin (a 76-residue protein attached to proteins as an intracellular targeting signal).. Its function is as follows. Ubiquitin-specific protease that specifically deubiquitinates monoubiquitinated DNA polymerase beta (polb), stabilizing polb thereby playing a role in base-excision repair (BER). This Xenopus laevis (African clawed frog) protein is Ubiquitin carboxyl-terminal hydrolase 47 (usp47).